Here is a 122-residue protein sequence, read N- to C-terminus: MTRIAGVNVPVKKCIPFGLTYIYGIGISTANIICHACGIDKSKRVSELRDKDIEKINSFIRQNYSIEGDLRKEVAMNIKSLVEMGCYRGVRHRKGLPVRGQRTHTNAKTRKGKSRLPIAGKE.

The span at 97–114 (PVRGQRTHTNAKTRKGKS) shows a compositional bias: basic residues. Positions 97-122 (PVRGQRTHTNAKTRKGKSRLPIAGKE) are disordered.

This sequence belongs to the universal ribosomal protein uS13 family. Part of the 30S ribosomal subunit. Forms a loose heterodimer with protein S19. Forms two bridges to the 50S subunit in the 70S ribosome.

Functionally, located at the top of the head of the 30S subunit, it contacts several helices of the 16S rRNA. In the 70S ribosome it contacts the 23S rRNA (bridge B1a) and protein L5 of the 50S subunit (bridge B1b), connecting the 2 subunits; these bridges are implicated in subunit movement. Contacts the tRNAs in the A and P-sites. In Wolbachia sp. subsp. Brugia malayi (strain TRS), this protein is Small ribosomal subunit protein uS13.